The chain runs to 153 residues: uncharacterized protein (153 aa).

The next 3 helical transmembrane spans lie at 17 to 37 (ITLI…SMFF), 44 to 64 (FLLC…IGMG), and 118 to 138 (FVFI…TLII).

It to M.jannaschii MJ0129 and MJ0554.

Its subcellular location is the cell membrane. This is an uncharacterized protein from Methanocaldococcus jannaschii (strain ATCC 43067 / DSM 2661 / JAL-1 / JCM 10045 / NBRC 100440) (Methanococcus jannaschii).